A 185-amino-acid chain; its full sequence is Ribosome-recycling factor (185 aa).

The protein belongs to the RRF family.

The protein resides in the cytoplasm. In terms of biological role, responsible for the release of ribosomes from messenger RNA at the termination of protein biosynthesis. May increase the efficiency of translation by recycling ribosomes from one round of translation to another. In Geobacillus kaustophilus (strain HTA426), this protein is Ribosome-recycling factor.